The following is a 306-amino-acid chain: Pantothenate kinase (306 aa).

An ATP-binding site is contributed by 91–98; it reads GSVAVGKS.

It belongs to the prokaryotic pantothenate kinase family.

The protein localises to the cytoplasm. The catalysed reaction is (R)-pantothenate + ATP = (R)-4'-phosphopantothenate + ADP + H(+). It functions in the pathway cofactor biosynthesis; coenzyme A biosynthesis; CoA from (R)-pantothenate: step 1/5. This chain is Pantothenate kinase, found in Streptococcus pyogenes serotype M12 (strain MGAS2096).